The following is a 400-amino-acid chain: 2-octaprenylphenol hydroxylase (400 aa).

Residues 49-52 (RVSA) and 297-303 (LAGQGVN) each bind FAD.

Belongs to the UbiH/COQ6 family. In terms of assembly, homotetramer. Component of the Ubi complex metabolon, which regroups five ubiquinone biosynthesis proteins (UbiE, UbiF, UbiG, UbiH and UbiI) and two accessory factors (UbiK and the lipid-binding protein UbiJ). FAD is required as a cofactor.

The protein localises to the cytoplasm. The enzyme catalyses 2-all-trans-octaprenylphenol + NADPH + O2 + H(+) = 3-(all-trans-octaprenyl)benzene-1,2-diol + NADP(+) + H2O. The catalysed reaction is a 2-(all-trans-polyprenyl)phenol + NADPH + O2 + H(+) = a 3-(all-trans-polyprenyl)benzene-1,2-diol + NADP(+) + H2O. It functions in the pathway cofactor biosynthesis; ubiquinone biosynthesis. Its function is as follows. FAD-dependent monooxygenase required for the aerobic hydroxylation of 2-octaprenylphenol to 2-octaprenyl-6-hydroxy-phenol, the first hydroxylation step in coenzyme Q (ubiquinone) biosynthesis. In Escherichia coli (strain K12), this protein is 2-octaprenylphenol hydroxylase.